Here is a 270-residue protein sequence, read N- to C-terminus: Chymotrypsin-like elastase family member 3A (270 aa).

Positions 1 to 15 (MMLRLLSSLLLVAVA) form a signal peptide, or 16. Positions 16-28 (SGYGPPSSHSSSR) are cleaved as a propeptide — activation peptide. In terms of domain architecture, Peptidase S1 spans 29-268 (VVHGEDAVPY…FIDWIEETIA (240 aa)). A disulfide bridge connects residues C58 and C74. H73 acts as the Charge relay system in catalysis. N114 carries N-linked (GlcNAc...) asparagine glycosylation. C117 and C120 are oxidised to a cystine. The Charge relay system role is filled by D123. Disulfide bonds link C157–C223, C188–C204, and C213–C244. S217 (charge relay system) is an active-site residue.

The protein belongs to the peptidase S1 family. Elastase subfamily.

It catalyses the reaction Preferential cleavage: Ala-|-Xaa. Does not hydrolyze elastin.. Efficient protease with alanine specificity but only little elastolytic activity. The sequence is that of Chymotrypsin-like elastase family member 3A (CELA3A) from Homo sapiens (Human).